A 452-amino-acid polypeptide reads, in one-letter code: tRNA modification GTPase MnmE (452 aa).

3 residues coordinate (6S)-5-formyl-5,6,7,8-tetrahydrofolate: Arg25, Glu82, and Arg125. One can recognise a TrmE-type G domain in the interval 221 to 374 (GLHVVLAGKP…LRARLLALAG (154 aa)). Position 231 (Asn231) interacts with K(+). GTP-binding positions include 231 to 236 (NVGKSS), 250 to 256 (TPIAGTT), 275 to 278 (DTAG), and 355 to 357 (SAR). Ser235 contacts Mg(2+). 3 residues coordinate K(+): Thr250, Ile252, and Thr255. Thr256 is a binding site for Mg(2+). Lys452 contacts (6S)-5-formyl-5,6,7,8-tetrahydrofolate.

It belongs to the TRAFAC class TrmE-Era-EngA-EngB-Septin-like GTPase superfamily. TrmE GTPase family. As to quaternary structure, homodimer. Heterotetramer of two MnmE and two MnmG subunits. K(+) is required as a cofactor.

Its subcellular location is the cytoplasm. In terms of biological role, exhibits a very high intrinsic GTPase hydrolysis rate. Involved in the addition of a carboxymethylaminomethyl (cmnm) group at the wobble position (U34) of certain tRNAs, forming tRNA-cmnm(5)s(2)U34. This chain is tRNA modification GTPase MnmE, found in Bordetella petrii (strain ATCC BAA-461 / DSM 12804 / CCUG 43448).